A 573-amino-acid chain; its full sequence is MLTRNPKTKSSLQILQDSVKWHHMAHKVNSLLDAYSGLLSNESMILAVNSSFVDPLLQFESQLKIIESSFGMLVVMPSLDKVKEMGSSYEYIEDMENLYHNILNIYENILTSLVSKDLYKLQILKEMLVWMSKDSSYLQERIMVIINKVLRFTVTKVRKYISVDAPCLGLLAAELSLLCSHEDPSIVKQASLGMCHLLYIARCQNDIGTNKPTNGKSHSLQFPSSDVEFLPKEFQQDESKIAQRVGQTLLPPLLTDFVQSLLMKLSSPDDKIASDAASILIFTLEFHAEKVTMVSKIVDAIYRQLCDNNCMKDVMLQVITLLTCTSPKKVIFQLMDYPVPADDTLIQMWKAACSQASVAPHVLKTILLILKGKPGEMEDTVTEGKRFSLDITNLMPLAACQALCTFLPLGSYRKAVAQYFPQLLTTLMFQVFYNSELKPILKDRALYAQDALRVLLNCSGLQQVDITLMKENFWDQLSEDLCYYHGVCFIAKTLSEYNFPQFPETLSYLYKLSVEGPRRSEDTVIVLIFLTEVSFVDCEQLCSHFLFLPKFKSKFQFLVSLPLNVGSYQDLRS.

HEAT repeat units lie at residues 118–155 (LYKLQILKEMLVWMSKDSSYLQERIMVIINKVLRFTVT), 252–289 (PLLTDFVQSLLMKLSSPDDKIASDAASILIFTLEFHAE), 292–328 (TMVSKIVDAIYRQLCDNNCMKDVMLQVITLLTCTSPK), 357–394 (SVAPHVLKTILLILKGKPGEMEDTVTEGKRFSLDITNL), and 418–458 (QYFP…LLNC).

In Homo sapiens (Human), this protein is Maestro heat-like repeat-containing protein family member 9 (MROH9).